We begin with the raw amino-acid sequence, 488 residues long: Integrin beta-like protein 1 (488 aa).

Residues Met-1 to Ala-21 form the signal peptide. Disulfide bonds link Cys-38–Cys-65, Cys-49–Cys-63, Cys-57–Cys-68, Cys-70–Cys-83, Cys-85–Cys-106, Cys-90–Cys-104, Cys-98–Cys-109, Cys-111–Cys-120, Cys-126–Cys-153, Cys-137–Cys-151, Cys-145–Cys-156, Cys-158–Cys-172, Cys-174–Cys-196, Cys-179–Cys-194, Cys-188–Cys-199, Cys-201–Cys-210, Cys-214–Cys-241, Cys-225–Cys-239, Cys-233–Cys-244, Cys-246–Cys-263, Cys-265–Cys-290, Cys-270–Cys-288, Cys-282–Cys-293, Cys-295–Cys-304, Cys-310–Cys-337, Cys-321–Cys-335, Cys-329–Cys-340, Cys-342–Cys-355, Cys-357–Cys-378, Cys-362–Cys-376, Cys-370–Cys-381, Cys-383–Cys-392, Cys-398–Cys-425, Cys-409–Cys-423, Cys-417–Cys-428, Cys-430–Cys-442, Cys-444–Cys-465, Cys-449–Cys-463, Cys-457–Cys-468, and Cys-470–Cys-479. 10 I-EGF domains span residues Cys-38 to Glu-84, Cys-85 to Gln-121, Cys-126 to Glu-173, Cys-174 to Glu-211, Cys-214 to Glu-264, Cys-265 to Glu-305, Cys-310 to Glu-356, Cys-357 to Gln-393, Cys-398 to Glu-443, and Cys-444 to Glu-480. An I repeat occupies Cys-49–Val-89. A cysteine-rich tandem repeats region spans residues Cys-49 to Pro-488. One copy of the II repeat lies at Cys-90–Met-136. The stretch at Cys-137 to Glu-178 is one III repeat. The stretch at Cys-179 to Arg-224 is one IV repeat. Residues Cys-225–Asn-269 form a V repeat. The VI repeat unit spans residues Cys-270–Lys-320. The stretch at Cys-321 to Gln-361 is one VII repeat. The VIII repeat unit spans residues Cys-362–Gln-408. Asn-399 is a glycosylation site (N-linked (GlcNAc...) asparagine). Residues Cys-409–Asp-448 form an IX repeat. The stretch at Cys-449–Pro-488 is one X repeat.

It localises to the secreted. In Xenopus laevis (African clawed frog), this protein is Integrin beta-like protein 1 (itgbl1).